We begin with the raw amino-acid sequence, 417 residues long: MGTRRRSARARARPPLAMPLAVLLLFACSSGVAAAAAQGIERIKDDPVGKLKVYVYELPPKYNKNIVAKDSRCLSHMFATEIFMHRFLLSSAIRTSNPDEADWFYTPVYTTCDLTPWGHPLTTKSPRMMRSAIKFISKYWPYWNRTEGADHFFVVPHDFAACFYFQEAKAIERGILPVLRRATLVQTFGQKNHACLKDGSITVPPYTPAHKIRAHLVPPETPRSIFVYFRGLFYDTSNDPEGGYYARGARASVWENFKNNPMFDISTDHPQTYYEDMQRAVFCLCPLGWAPWSPRLVEAVVFGCIPVIIADDIVLPFSDAIPWEEIAVFVAEDDVPQLDTILTSIPTEVILRKQAMLAEPSMKQTMLFPQPAEPGDGFHQVMNALARKLPHGRDVFLKPGQKVLNWTEGTREDLKPW.

The Cytoplasmic portion of the chain corresponds to 1-15; sequence MGTRRRSARARARPP. A helical; Signal-anchor for type II membrane protein membrane pass occupies residues 16-36; that stretch reads LAMPLAVLLLFACSSGVAAAA. The Lumenal segment spans residues 37–417; that stretch reads AQGIERIKDD…EGTREDLKPW (381 aa). N-linked (GlcNAc...) asparagine glycans are attached at residues Asn-144 and Asn-405.

It belongs to the glycosyltransferase 47 family.

The protein resides in the golgi apparatus membrane. Functionally, involved in the synthesis of glucuronoxylan hemicellulose in secondary cell walls. The chain is Probable glucuronosyltransferase GUT1 (GUT1) from Oryza sativa subsp. japonica (Rice).